A 316-amino-acid polypeptide reads, in one-letter code: Transaldolase (316 aa).

The active-site Schiff-base intermediate with substrate is the Lys-132.

The protein belongs to the transaldolase family. Type 1 subfamily. As to quaternary structure, homodimer.

The protein resides in the cytoplasm. It carries out the reaction D-sedoheptulose 7-phosphate + D-glyceraldehyde 3-phosphate = D-erythrose 4-phosphate + beta-D-fructose 6-phosphate. Its pathway is carbohydrate degradation; pentose phosphate pathway; D-glyceraldehyde 3-phosphate and beta-D-fructose 6-phosphate from D-ribose 5-phosphate and D-xylulose 5-phosphate (non-oxidative stage): step 2/3. Functionally, transaldolase is important for the balance of metabolites in the pentose-phosphate pathway. The sequence is that of Transaldolase from Methylobacillus flagellatus (strain ATCC 51484 / DSM 6875 / VKM B-1610 / KT).